A 74-amino-acid polypeptide reads, in one-letter code: Small ribosomal subunit protein bS18 (74 aa).

The protein belongs to the bacterial ribosomal protein bS18 family. In terms of assembly, part of the 30S ribosomal subunit. Forms a tight heterodimer with protein bS6.

In terms of biological role, binds as a heterodimer with protein bS6 to the central domain of the 16S rRNA, where it helps stabilize the platform of the 30S subunit. In Sphingopyxis alaskensis (strain DSM 13593 / LMG 18877 / RB2256) (Sphingomonas alaskensis), this protein is Small ribosomal subunit protein bS18.